An 836-amino-acid polypeptide reads, in one-letter code: Probable serine/threonine-protein kinase dyrk1 (836 aa).

Over residues 99–278 (QQQYQQQHNN…SSNNNNNNKQ (180 aa)) the composition is skewed to low complexity. The segment at 99 to 286 (QQQYQQQHNN…KQSKYNDGYD (188 aa)) is disordered. A Protein kinase domain is found at 304-624 (FEIISSLGKG…PLEALQHSFF (321 aa)). Residues 310–318 (LGKGSFGQV) and lysine 333 contribute to the ATP site. Catalysis depends on aspartate 432, which acts as the Proton acceptor. Disordered regions lie at residues 627-697 (DETS…QQQQ), 718-767 (TYSP…INSN), and 785-836 (NIYN…NNNI). Low complexity predominate over residues 630–697 (SQPPQQQSQQ…QQLQQQQQQQ (68 aa)). Positions 718 to 728 (TYSPTTQQSNH) are enriched in polar residues. Residues 729 to 744 (KLVDQMKKASMKDKSP) show a composition bias toward basic and acidic residues. Residues 785-816 (NIYNNNNNNNNNNNNNNNNNNSNNYNNSNELS) are compositionally biased toward low complexity.

It belongs to the protein kinase superfamily. CMGC Ser/Thr protein kinase family. MNB/DYRK subfamily.

The enzyme catalyses L-seryl-[protein] + ATP = O-phospho-L-seryl-[protein] + ADP + H(+). It catalyses the reaction L-threonyl-[protein] + ATP = O-phospho-L-threonyl-[protein] + ADP + H(+). The catalysed reaction is L-tyrosyl-[protein] + ATP = O-phospho-L-tyrosyl-[protein] + ADP + H(+). The sequence is that of Probable serine/threonine-protein kinase dyrk1 (dyrk1) from Dictyostelium discoideum (Social amoeba).